The primary structure comprises 173 residues: NADH-quinone oxidoreductase subunit B 2 (173 aa).

Cysteine 42, cysteine 43, cysteine 107, and cysteine 137 together coordinate [4Fe-4S] cluster.

This sequence belongs to the complex I 20 kDa subunit family. In terms of assembly, NDH-1 is composed of 14 different subunits. Subunits NuoB, C, D, E, F, and G constitute the peripheral sector of the complex. It depends on [4Fe-4S] cluster as a cofactor.

It localises to the cell inner membrane. The catalysed reaction is a quinone + NADH + 5 H(+)(in) = a quinol + NAD(+) + 4 H(+)(out). In terms of biological role, NDH-1 shuttles electrons from NADH, via FMN and iron-sulfur (Fe-S) centers, to quinones in the respiratory chain. Couples the redox reaction to proton translocation (for every two electrons transferred, four hydrogen ions are translocated across the cytoplasmic membrane), and thus conserves the redox energy in a proton gradient. The sequence is that of NADH-quinone oxidoreductase subunit B 2 from Anaeromyxobacter dehalogenans (strain 2CP-C).